The primary structure comprises 294 residues: Ribosomal protein L11 methyltransferase (294 aa).

Residues Thr146, Gly167, Asp189, and Asn231 each coordinate S-adenosyl-L-methionine.

Belongs to the methyltransferase superfamily. PrmA family.

It is found in the cytoplasm. It carries out the reaction L-lysyl-[protein] + 3 S-adenosyl-L-methionine = N(6),N(6),N(6)-trimethyl-L-lysyl-[protein] + 3 S-adenosyl-L-homocysteine + 3 H(+). Functionally, methylates ribosomal protein L11. The protein is Ribosomal protein L11 methyltransferase of Photobacterium profundum (strain SS9).